Here is a 208-residue protein sequence, read N- to C-terminus: Potassium-transporting ATPase KdpC subunit (208 aa).

A helical transmembrane segment spans residues 6–26 (PALLVSIVLLVVCGLVYPLVL).

It belongs to the KdpC family. As to quaternary structure, the system is composed of three essential subunits: KdpA, KdpB and KdpC.

The protein resides in the cell membrane. Functionally, part of the high-affinity ATP-driven potassium transport (or Kdp) system, which catalyzes the hydrolysis of ATP coupled with the electrogenic transport of potassium into the cytoplasm. This subunit acts as a catalytic chaperone that increases the ATP-binding affinity of the ATP-hydrolyzing subunit KdpB by the formation of a transient KdpB/KdpC/ATP ternary complex. The sequence is that of Potassium-transporting ATPase KdpC subunit from Clostridioides difficile (strain 630) (Peptoclostridium difficile).